A 476-amino-acid chain; its full sequence is 3-isopropylmalate dehydratase large subunit (476 aa).

Positions 357, 417, and 420 each coordinate [4Fe-4S] cluster.

The protein belongs to the aconitase/IPM isomerase family. LeuC type 1 subfamily. Heterodimer of LeuC and LeuD. Requires [4Fe-4S] cluster as cofactor.

It catalyses the reaction (2R,3S)-3-isopropylmalate = (2S)-2-isopropylmalate. It participates in amino-acid biosynthesis; L-leucine biosynthesis; L-leucine from 3-methyl-2-oxobutanoate: step 2/4. Functionally, catalyzes the isomerization between 2-isopropylmalate and 3-isopropylmalate, via the formation of 2-isopropylmaleate. The chain is 3-isopropylmalate dehydratase large subunit from Mycobacterium avium (strain 104).